The following is a 378-amino-acid chain: uncharacterized protein (378 aa).

The next 10 membrane-spanning stretches (helical) occupy residues 7-29 (VTPFFFALALLNLLISLFIRLSQ), 33-55 (LFFVSLVFGFVGLTLMGAMYQII), 68-85 (VSYLVFFLILVSFYEFYT), 90-108 (SGSLFLFLGSLIFFFHLLL), 115-137 (PLTVRFLLASMIYLVLSALFLYL), 152-174 (LTVGSMLNAIYGVELAWIPMLIM), 204-225 (NYKLIALAGLLEFGVALYFLYL), 245-267 (IFLFALLFLPLGMLLGIFSASHA), 280-302 (LILYGFGAFTIFGGMLHLLPRIV), and 347-366 (FSPLHVISTVVYLVIMALFL).

The protein resides in the cell membrane. This is an uncharacterized protein from Aquifex aeolicus (strain VF5).